Consider the following 140-residue polypeptide: Nucleoside diphosphate kinase (140 aa).

ATP is bound by residues Lys-11, Phe-59, Arg-87, Thr-93, Arg-104, and Asn-114. Residue His-117 is the Pros-phosphohistidine intermediate of the active site.

It belongs to the NDK family. As to quaternary structure, homotetramer. Mg(2+) serves as cofactor.

The protein resides in the cytoplasm. The catalysed reaction is a 2'-deoxyribonucleoside 5'-diphosphate + ATP = a 2'-deoxyribonucleoside 5'-triphosphate + ADP. The enzyme catalyses a ribonucleoside 5'-diphosphate + ATP = a ribonucleoside 5'-triphosphate + ADP. Its function is as follows. Major role in the synthesis of nucleoside triphosphates other than ATP. The ATP gamma phosphate is transferred to the NDP beta phosphate via a ping-pong mechanism, using a phosphorylated active-site intermediate. This is Nucleoside diphosphate kinase from Ruegeria sp. (strain TM1040) (Silicibacter sp.).